Consider the following 223-residue polypeptide: Gastrula zinc finger protein XlCGF52.1 (223 aa).

C2H2-type zinc fingers lie at residues 6–27 (FTCP…TEDH), 33–55 (FTCM…QRVH), 61–83 (YTCT…ISTH), 89–111 (FPCT…QRIH), 117–139 (FQCL…QRSH), 145–167 (YACS…ERIH), 173–195 (YECN…QKIH), and 201–223 (FTCT…QKIH).

This sequence belongs to the krueppel C2H2-type zinc-finger protein family.

The protein localises to the nucleus. In terms of biological role, may be involved in transcriptional regulation. The polypeptide is Gastrula zinc finger protein XlCGF52.1 (Xenopus laevis (African clawed frog)).